We begin with the raw amino-acid sequence, 267 residues long: Thiamine thiazole synthase (267 aa).

Residues serine 47, 66–67, glycine 74, valine 138, and 164–166 each bind NAD(+); these read ER and HID. Fe cation contacts are provided by aspartate 166 and histidine 181. NAD(+) is bound by residues serine 184 and methionine 230. Glycine is bound at residue arginine 240.

Belongs to the THI4 family. Homooctamer; tetramer of dimers. It depends on Fe(2+) as a cofactor.

The catalysed reaction is hydrogen sulfide + glycine + NAD(+) = ADP-5-ethyl-4-methylthiazole-2-carboxylate + nicotinamide + 3 H2O + H(+). The protein operates within cofactor biosynthesis; thiamine diphosphate biosynthesis. In terms of biological role, involved in the biosynthesis of the thiazole moiety of thiamine. Catalyzes the conversion of NAD and glycine to adenosine diphosphate 5-(2-hydroxyethyl)-4-methylthiazole-2-carboxylate (ADT), an adenylated thiazole intermediate, using free sulfide as a source of sulfur. In Methanocaldococcus jannaschii (strain ATCC 43067 / DSM 2661 / JAL-1 / JCM 10045 / NBRC 100440) (Methanococcus jannaschii), this protein is Thiamine thiazole synthase.